We begin with the raw amino-acid sequence, 325 residues long: Diacylglycerol acyltransferase/mycolyltransferase Ag85B (325 aa).

The N-terminal stretch at 1 to 38 (MTFIDKIRGHWARRMTVAAVAALLLPGLVGVVGGSATA) is a signal peptide. 82 to 83 (LR) contributes to the substrate binding site. Residues 98 to 108 (FEMFLDSGLSV) form a fibronectin-binding region. Cysteines 127 and 132 form a disulfide. Ser166 contacts substrate. Ser166 functions as the Nucleophile in the catalytic mechanism. The active site involves Glu272. Substrate-binding positions include 274 to 277 (LTIR) and 304 to 306 (HNW). Residue His304 is part of the active site.

The protein belongs to the mycobacterial A85 antigen family.

It localises to the secreted. The catalysed reaction is 2 alpha,alpha'-trehalose 6-mycolate = alpha,alpha'-trehalose 6,6'-bismycolate + alpha,alpha-trehalose. It carries out the reaction an acyl-CoA + a 1,2-diacyl-sn-glycerol = a triacyl-sn-glycerol + CoA. The antigen 85 proteins (FbpA, FbpB, FbpC) are responsible for the high affinity of mycobacteria for fibronectin, a large adhesive glycoprotein. They also help to maintain the integrity of the cell wall by catalyzing the transfer of mycolic acids to cell wall arabinogalactan and through the synthesis of alpha,alpha-trehalose dimycolate (TDM, cord factor). They catalyze the transfer of a mycoloyl residue from one molecule of alpha,alpha-trehalose monomycolate (TMM) to another TMM, leading to the formation of TDM. The protein is Diacylglycerol acyltransferase/mycolyltransferase Ag85B (fbpB) of Mycolicibacterium smegmatis (strain ATCC 700084 / mc(2)155) (Mycobacterium smegmatis).